Reading from the N-terminus, the 160-residue chain is Ribosome maturation factor RimP (160 aa).

It belongs to the RimP family.

It localises to the cytoplasm. Functionally, required for maturation of 30S ribosomal subunits. This Orientia tsutsugamushi (strain Ikeda) (Rickettsia tsutsugamushi) protein is Ribosome maturation factor RimP.